The primary structure comprises 203 residues: Endo-type membrane-bound lytic murein transglycosylase A (203 aa).

The N-terminal stretch at 1 to 15 (MKLRWFAFLMVLLAG) is a signal peptide. Cys-16 carries N-palmitoyl cysteine lipidation. Residue Cys-16 is the site of S-diacylglycerol cysteine attachment.

The protein belongs to the transglycosylase Slt family.

The protein resides in the cell outer membrane. The enzyme catalyses Endolytic cleavage of the (1-&gt;4)-beta-glycosidic linkage between N-acetylmuramic acid (MurNAc) and N-acetylglucosamine (GlcNAc) residues in peptidoglycan with concomitant formation of a 1,6-anhydrobond in the MurNAc residue.. Murein-degrading enzyme. May play a role in recycling of muropeptides during cell elongation and/or cell division. Preferentially cleaves at a distance of more than two disaccharide units from the ends of the glycan chain. The chain is Endo-type membrane-bound lytic murein transglycosylase A from Enterobacter sp. (strain 638).